The sequence spans 219 residues: Flagellar L-ring protein (219 aa).

The signal sequence occupies residues 1 to 14 (MKRLVLISLVLAAG). A lipid anchor (N-palmitoyl cysteine) is attached at Cys15. Cys15 carries S-diacylglycerol cysteine lipidation.

This sequence belongs to the FlgH family. In terms of assembly, the basal body constitutes a major portion of the flagellar organelle and consists of four rings (L,P,S, and M) mounted on a central rod.

Its subcellular location is the cell outer membrane. It is found in the bacterial flagellum basal body. Its function is as follows. Assembles around the rod to form the L-ring and probably protects the motor/basal body from shearing forces during rotation. The protein is Flagellar L-ring protein of Dechloromonas aromatica (strain RCB).